We begin with the raw amino-acid sequence, 97 residues long: Aspartyl/glutamyl-tRNA(Asn/Gln) amidotransferase subunit C (97 aa).

The protein belongs to the GatC family. As to quaternary structure, heterotrimer of A, B and C subunits.

It catalyses the reaction L-glutamyl-tRNA(Gln) + L-glutamine + ATP + H2O = L-glutaminyl-tRNA(Gln) + L-glutamate + ADP + phosphate + H(+). It carries out the reaction L-aspartyl-tRNA(Asn) + L-glutamine + ATP + H2O = L-asparaginyl-tRNA(Asn) + L-glutamate + ADP + phosphate + 2 H(+). Its function is as follows. Allows the formation of correctly charged Asn-tRNA(Asn) or Gln-tRNA(Gln) through the transamidation of misacylated Asp-tRNA(Asn) or Glu-tRNA(Gln) in organisms which lack either or both of asparaginyl-tRNA or glutaminyl-tRNA synthetases. The reaction takes place in the presence of glutamine and ATP through an activated phospho-Asp-tRNA(Asn) or phospho-Glu-tRNA(Gln). The polypeptide is Aspartyl/glutamyl-tRNA(Asn/Gln) amidotransferase subunit C (Listeria welshimeri serovar 6b (strain ATCC 35897 / DSM 20650 / CCUG 15529 / CIP 8149 / NCTC 11857 / SLCC 5334 / V8)).